The sequence spans 262 residues: Carbohydrate deacetylase (262 aa).

Histidine 129 lines the Mg(2+) pocket.

The protein belongs to the YdjC deacetylase family. In terms of assembly, homodimer. Mg(2+) serves as cofactor.

Its function is as follows. Probably catalyzes the deacetylation of acetylated carbohydrates an important step in the degradation of oligosaccharides. This is Carbohydrate deacetylase from Enterococcus faecalis (strain ATCC 700802 / V583).